The sequence spans 440 residues: Xylose isomerase (440 aa).

Mg(2+) is bound by residues Asp307 and Asp309.

The protein belongs to the xylose isomerase family. In terms of assembly, homotetramer. Mg(2+) serves as cofactor.

It is found in the cytoplasm. The enzyme catalyses alpha-D-xylose = alpha-D-xylulofuranose. The sequence is that of Xylose isomerase from Escherichia coli (strain K12 / MC4100 / BW2952).